The sequence spans 484 residues: Glutamate--tRNA ligase (484 aa).

A 'HIGH' region motif is present at residues Pro-10–Gly-20. The short motif at Lys-252–Arg-256 is the 'KMSKS' region element. Position 255 (Lys-255) interacts with ATP.

Belongs to the class-I aminoacyl-tRNA synthetase family. Glutamate--tRNA ligase type 1 subfamily. Monomer.

Its subcellular location is the cytoplasm. It catalyses the reaction tRNA(Glu) + L-glutamate + ATP = L-glutamyl-tRNA(Glu) + AMP + diphosphate. Functionally, catalyzes the attachment of glutamate to tRNA(Glu) in a two-step reaction: glutamate is first activated by ATP to form Glu-AMP and then transferred to the acceptor end of tRNA(Glu). This chain is Glutamate--tRNA ligase, found in Mycoplasma genitalium (strain ATCC 33530 / DSM 19775 / NCTC 10195 / G37) (Mycoplasmoides genitalium).